A 406-amino-acid polypeptide reads, in one-letter code: GTPase Obg (406 aa).

The region spanning 1-159 (MRFVDEAVIT…REIRLELKVL (159 aa)) is the Obg domain. A disordered region spans residues 120–143 (GGEGGLGNTHFKSSTNRAPRKCTT). Positions 160–333 (ADVGLLGMPN…VVYYLMDQIE (174 aa)) constitute an OBG-type G domain. Residues 166–173 (GMPNAGKS), 191–195 (FTTMV), 213–216 (DIPG), 283–286 (NKLD), and 314–316 (SGL) contribute to the GTP site. The Mg(2+) site is built by serine 173 and threonine 193. Residues 381 to 406 (ESMMDDDDDFDDDEDDGDVESIYVRD) form a disordered region. Residues 383–399 (MMDDDDDFDDDEDDGDV) show a composition bias toward acidic residues.

The protein belongs to the TRAFAC class OBG-HflX-like GTPase superfamily. OBG GTPase family. As to quaternary structure, monomer. Mg(2+) serves as cofactor.

The protein resides in the cytoplasm. Its function is as follows. An essential GTPase which binds GTP, GDP and possibly (p)ppGpp with moderate affinity, with high nucleotide exchange rates and a fairly low GTP hydrolysis rate. Plays a role in control of the cell cycle, stress response, ribosome biogenesis and in those bacteria that undergo differentiation, in morphogenesis control. The polypeptide is GTPase Obg (Acinetobacter baumannii (strain SDF)).